Here is a 139-residue protein sequence, read N- to C-terminus: Hydrogenase maturation factor HypA (139 aa).

Residue His2 participates in Ni(2+) binding. Zn(2+) is bound by residues Cys73, Cys76, Cys110, and Cys113.

The protein belongs to the HypA/HybF family.

Involved in the maturation of [NiFe] hydrogenases. Required for nickel insertion into the metal center of the hydrogenase. The sequence is that of Hydrogenase maturation factor HypA from Thermococcus gammatolerans (strain DSM 15229 / JCM 11827 / EJ3).